The sequence spans 201 residues: Ribonuclease HII (201 aa).

An RNase H type-2 domain is found at 10-200 (LIEAGCDEAG…LGDGQLELFS (191 aa)). A divalent metal cation contacts are provided by aspartate 16, glutamate 17, and aspartate 108.

It belongs to the RNase HII family. Requires Mn(2+) as cofactor. Mg(2+) is required as a cofactor.

The protein localises to the cytoplasm. The catalysed reaction is Endonucleolytic cleavage to 5'-phosphomonoester.. Its function is as follows. Endonuclease that specifically degrades the RNA of RNA-DNA hybrids. This Bacteroides fragilis (strain ATCC 25285 / DSM 2151 / CCUG 4856 / JCM 11019 / LMG 10263 / NCTC 9343 / Onslow / VPI 2553 / EN-2) protein is Ribonuclease HII.